The chain runs to 307 residues: Tyrosine recombinase XerC (307 aa).

Residues 6 to 89 enclose the Core-binding (CB) domain; it reads HNTLQTVNTF…TLRTFFRYLM (84 aa). The Tyr recombinase domain occupies 110-293; that stretch reads RLPKALDVDQ…DFQHLAQVYD (184 aa). Active-site residues include Arg-151, Lys-175, His-245, Arg-248, and His-271. Tyr-280 (O-(3'-phospho-DNA)-tyrosine intermediate) is an active-site residue.

This sequence belongs to the 'phage' integrase family. XerC subfamily. In terms of assembly, forms a cyclic heterotetrameric complex composed of two molecules of XerC and two molecules of XerD.

It localises to the cytoplasm. Functionally, site-specific tyrosine recombinase, which acts by catalyzing the cutting and rejoining of the recombining DNA molecules. The XerC-XerD complex is essential to convert dimers of the bacterial chromosome into monomers to permit their segregation at cell division. It also contributes to the segregational stability of plasmids. The chain is Tyrosine recombinase XerC from Alcanivorax borkumensis (strain ATCC 700651 / DSM 11573 / NCIMB 13689 / SK2).